The following is a 705-amino-acid chain: Polyribonucleotide nucleotidyltransferase (705 aa).

Positions 487 and 493 each coordinate Mg(2+). In terms of domain architecture, KH spans proline 554–isoleucine 613. Residues glycine 623–lysine 691 form the S1 motif domain.

This sequence belongs to the polyribonucleotide nucleotidyltransferase family. Requires Mg(2+) as cofactor.

Its subcellular location is the cytoplasm. It catalyses the reaction RNA(n+1) + phosphate = RNA(n) + a ribonucleoside 5'-diphosphate. Its function is as follows. Involved in mRNA degradation. Catalyzes the phosphorolysis of single-stranded polyribonucleotides processively in the 3'- to 5'-direction. The protein is Polyribonucleotide nucleotidyltransferase of Oceanobacillus iheyensis (strain DSM 14371 / CIP 107618 / JCM 11309 / KCTC 3954 / HTE831).